A 400-amino-acid chain; its full sequence is Phosphoglycerate kinase (400 aa).

Residues 23 to 25 (DLN), Arg38, 61 to 64 (HFGR), Arg120, and Arg153 each bind substrate. Residues Lys203, Glu325, and 355-358 (GGDT) each bind ATP.

Belongs to the phosphoglycerate kinase family. In terms of assembly, monomer.

The protein resides in the cytoplasm. It catalyses the reaction (2R)-3-phosphoglycerate + ATP = (2R)-3-phospho-glyceroyl phosphate + ADP. Its pathway is carbohydrate degradation; glycolysis; pyruvate from D-glyceraldehyde 3-phosphate: step 2/5. This Methylobacterium radiotolerans (strain ATCC 27329 / DSM 1819 / JCM 2831 / NBRC 15690 / NCIMB 10815 / 0-1) protein is Phosphoglycerate kinase.